The chain runs to 300 residues: Cyclic nucleotide synthase CdnE01 (300 aa).

Mg(2+) is bound by residues Asp63, Asp65, and Asp137.

This sequence belongs to the CD-NTase family. E01 subfamily. Requires Mg(2+) as cofactor.

Binds to and probably activated by a virus-derived, approximately 400 nucleotide RNA (called CBASS-activating bacteriophage RNA, cabRNA) that begins in the viral terminase subunit terS and extends into terL, as well as by a shorter RNA with part of the cabRNA sequence able to form a hairpin. RNA secondary and/or tertiary structure, as well as viral infection itself, are important for CdnE activation. Its function is as follows. Cyclic nucleotide synthase (second messenger synthase) of a CBASS antivirus system. CBASS (cyclic oligonucleotide-based antiphage signaling system) provides immunity against bacteriophage. The CD-NTase protein synthesizes cyclic nucleotides in response to infection; these serve as specific second messenger signals. The signals activate a diverse range of effectors, leading to bacterial cell death and thus abortive phage infection. A type I-B CBASS system. In terms of biological role, protects S.aureus against phage infection. When the CBASS operon (cdnE and the following gene) is introduced in S.aureus strain RN4220 there is strong protection against lytic DNA phages 80alpha-vir and phi-NM1-gamma-6 but little to no protection against phages phi-NM4-gamma-4 or phi-12-gamma-3. The polypeptide is Cyclic nucleotide synthase CdnE01 (Staphylococcus haemolyticus).